The chain runs to 379 residues: MPNPAFSARIERMKLRRKGTSDQLRVATESISNQRYDGLEKYTLLEDVLHLSESWENRGKGDSAIRYIIGAMQPVDARYTEISFETASRIENQLSKKLAHNLDFRVQGSVPLDIHIKGFSDVDLLIIDTQMLMYDVNGGGSYSPTSRDGRDVIIELREAARDALEMAFPTALVDDNNAKSLRITGGSLQREVDVVPSIWWDTKEYQSMKREEDRGVTIIDKNTRERIYNAPFLHIKRIKDKCDQCNGGIRKSIRLLKTLKADSKDEGSDIDLSSYDIASLMFHADANNLNHSTYYELAVLVETHRLLNYLSQNYEVAMQLDVPNGTRKIFEKPESHVELLKLTEMVNSVVTEVLREITGRPTDFYANDKCDVLRKQMVY.

Positions 107, 109, 123, and 179 each coordinate UTP. A Mg(2+)-binding site is contributed by D123. Residue D193 participates in Mg(2+) binding. UTP is bound by residues N229, K257, and S274. The Pyrimidine specificity motif (R/Q)xW in donor pocket motif lies at 328-330 (KIF).

This sequence belongs to the CD-NTase family. E02 subfamily. It depends on Mg(2+) as a cofactor.

The enzyme catalyses 2 UTP = c-di-UMP + 2 diphosphate. The catalysed reaction is UTP + ATP = 3',3'-cUAMP + 2 diphosphate. It catalyses the reaction UTP + CTP = cyclic CMP-UMP + 2 diphosphate. In terms of biological role, cyclic nucleotide synthase (second messenger synthase) of a CBASS antivirus system. CBASS (cyclic oligonucleotide-based antiphage signaling system) provides immunity against bacteriophage. The CD-NTase protein synthesizes cyclic nucleotides in response to infection; these serve as specific second messenger signals. The signals activate a diverse range of effectors, leading to bacterial cell death and thus abortive phage infection. The effector protein for this system is membrane protein Cap15. A type I-B(UU) CBASS system. Its function is as follows. Cyclic dinucleotide synthase that preferentially catalyzes the synthesis of 3',3'-cyclic UMP-UMP (c-di-UMP) and 3',3'-cyclic UMP-AMP, with minor amounts of 3',3'-cyclic UMP-CMP, which are second messengers for cell signal transduction. Protects E.coli against phage infection. When the CBASS operon (cap15-cdnE) is introduced in E.coli MG1655 it protects against phages T2, T4, T5, T6, SECPhi4, SECPhi6, SECPhi17, SECPhi18 and SECPhi27, but not against phage T7. The protein is Cyclic dinucleotide synthase CdnE of Yersinia aleksiciae.